A 2947-amino-acid chain; its full sequence is 3'-5' exoribonuclease HELZ2 (2947 aa).

A C3H1-type 1 zinc finger spans residues 85–114 (PMRYQVCHYYRPGLGCRRHWNRCTFARSPE). The C2H2-type zinc-finger motif lies at 167–187 (CFTCCPPCLCPVDPRGHCPKH). The C3H1-type 2 zinc-finger motif lies at 221-245 (YCMYVGRGVPCRHGASRCEYAHSAV). The segment at 289 to 311 (CHACLVTCNSQEAFENHCSSLEH) adopts a C2H2-type; atypical zinc-finger fold. A UvrD-like helicase ATP-binding domain is found at 769–1317 (VGLIAGRRPE…ELLDESQQVT (549 aa)). 790–797 (GPFGTGKT) contacts ATP. The interaction with THRAP3 stretch occupies residues 809-1290 (QQPHTKVLIC…GGMSEEDSES (482 aa)). A DEAA box motif is present at residues 913–916 (DEAA). The disordered stretch occupies residues 1260–1292 (EDTASGNSASRDAAAEVSTLEGGMSEEDSESDF). 4 short sequence motifs (LXXLL motif) span residues 1306-1310 (LKELL), 1348-1352 (LWKFL), 1403-1407 (LVQIL), and 2240-2244 (LEGLP). Arginine 2381 is modified (omega-N-methylarginine). The segment at 2413–2947 (PEPCRGNWPR…RVQRKSALSS (535 aa)) is interaction with THRAP3. Positions 2449–2726 (LNQSQDRAVR…IMLDTQYRMH (278 aa)) constitute a UvrD-like helicase ATP-binding 2 domain. Residue 2470-2477 (GPPGTGKT) participates in ATP binding. An LXXLL motif 5 motif is present at residues 2525 to 2529 (LGGLL).

It belongs to the DNA2/NAM7 helicase family. Interacts with PPARA (via DNA-binding domain) and PPARG; the interaction stimulates the transcriptional activity of PPARA and PPARG. Interacts with THRAP3; the interaction is direct and HELZ2 and THRAP3 synergistically enhance the transcriptional activity of PPARG. It is probably part of the peroxisome proliferator activated receptor alpha interacting complex (PRIC).

Its subcellular location is the cytoplasm. It carries out the reaction Exonucleolytic cleavage in the 3'- to 5'-direction to yield nucleoside 5'-phosphates.. The catalysed reaction is ATP + H2O = ADP + phosphate + H(+). Its function is as follows. Can degrade highly structured RNAs through its concerted ATP-dependent RNA helicase and 3' to 5' exoribonuclease activities. Shows a strong preference for pyrimidine over purine residues for its nuclease activity. Acts as a transcriptional coactivator for a number of nuclear receptors including PPARA, PPARG, THRA, THRB and RXRA. This Mus musculus (Mouse) protein is 3'-5' exoribonuclease HELZ2 (Helz2).